A 443-amino-acid chain; its full sequence is Thymidine phosphorylase (443 aa).

This sequence belongs to the thymidine/pyrimidine-nucleoside phosphorylase family. In terms of assembly, homodimer.

It catalyses the reaction thymidine + phosphate = 2-deoxy-alpha-D-ribose 1-phosphate + thymine. It functions in the pathway pyrimidine metabolism; dTMP biosynthesis via salvage pathway; dTMP from thymine: step 1/2. Functionally, the enzymes which catalyze the reversible phosphorolysis of pyrimidine nucleosides are involved in the degradation of these compounds and in their utilization as carbon and energy sources, or in the rescue of pyrimidine bases for nucleotide synthesis. The protein is Thymidine phosphorylase of Shewanella sp. (strain MR-4).